A 985-amino-acid chain; its full sequence is Na(+)/H(+) antiporter (985 aa).

At 1-12 (MAIWEQLEVSKA) the chain is on the cytoplasmic side. Residues 13 to 33 (HVAYACVGVFSSIFSLVSLYV) traverse the membrane as a helical segment. The Extracellular portion of the chain corresponds to 34–36 (KEK). The chain crosses the membrane as a helical span at residues 37–57 (LYIGESTVAGIFGLIVGPVCL). At 58 to 70 (NWFNPLKWGNSDS) the chain is on the cytoplasmic side. The helical transmembrane segment at 71 to 91 (ITLEITRIVLCLQIFAVAVEL) threads the bilayer. Residues 92–105 (PRKYMLKHWVSVTM) lie on the Extracellular side of the membrane. Residues 106-126 (LLLPVMTAGWLIIGLFVWILI) form a helical membrane-spanning segment. At 127-128 (PG) the chain is on the cytoplasmic side. A helical membrane pass occupies residues 129-149 (LNFSASLLISACITATDPILA). The Extracellular portion of the chain corresponds to 150–176 (QSVVSGKFAQRVPGHLRNLLSAESGCN). The chain crosses the membrane as a helical span at residues 177–197 (DGMAFPFLFLSMNLILHPGNG). The Cytoplasmic segment spans residues 198 to 203 (REIVKD). A helical membrane pass occupies residues 204-224 (WICVTILYECLFGCLLGCFIG). At 225-244 (YVGRITIRFAEKKNIIDRES) the chain is on the extracellular side. The chain crosses the membrane as a helical span at residues 245-265 (FLAFYVVLAFMCAGFGSILGV). The Cytoplasmic segment spans residues 266–294 (DDLLVSFAAGATFAWDGWFSQKTQESNVS). Residues 295 to 315 (TVIDLLLNYAYFIYFGAIIPW) traverse the membrane as a helical segment. Residues 316–319 (SQFN) lie on the Extracellular side of the membrane. Residues 320 to 340 (NGEIGTNVWRLIILSIVVIFL) traverse the membrane as a helical segment. The Cytoplasmic segment spans residues 341-361 (RRIPAVMILRPLIPDIKSWRE). A helical transmembrane segment spans residues 362–382 (ALFVGHFGPIGVGAIFAAILA). The Extracellular portion of the chain corresponds to 383-410 (RGELESTFSDEPTPLNVVPSKEESKHWQ). A helical transmembrane segment spans residues 411 to 431 (LIACIWPITCFFIVTSIIVHG). Topologically, residues 432 to 985 (SSVAIITLGR…ALSKTLGLNK (554 aa)) are cytoplasmic. Disordered regions lie at residues 489-701 (MTLS…KPGT) and 726-760 (DRNE…GGRL). The segment covering 517–526 (NNDQIGSVAT) has biased composition (polar residues). Residues 538-558 (PRRRKLSRKEKRLNRRQKLRN) are compositionally biased toward basic residues. Composition is skewed to basic and acidic residues over residues 559 to 572 (KGRE…KNEM) and 580 to 593 (DLGR…KEAR). S568 bears the Phosphoserine mark. Residues 637–646 (SFESSERSSS) show a composition bias toward low complexity. Acidic residues predominate over residues 661–675 (EETESEIESEDEMEN). Residues 676–698 (ESERSMASSEERRIRKMKEEEMK) show a composition bias toward basic and acidic residues. The segment covering 743-756 (SSLTTTMTNLSSSS) has biased composition (low complexity). T765 bears the Phosphothreonine mark. A phosphoserine mark is found at S768 and S774. The disordered stretch occupies residues 812–985 (INPHKSDDDK…ALSKTLGLNK (174 aa)). Composition is skewed to basic and acidic residues over residues 815–828 (HKSD…RPRN) and 854–863 (DEEKAIEGPS). Positions 887-920 (LDLEDEPSSEEDLGDSYNMDDSEDYDDNAYESET) are enriched in acidic residues. Positions 970-979 (SAAVKSALSK) are enriched in low complexity.

It belongs to the fungal Na(+)/H(+) exchanger family.

Its subcellular location is the cell membrane. Its function is as follows. Sodium export from cell, takes up external protons in exchange for internal sodium ions. Also capable of exporting potassium ions. This Saccharomyces cerevisiae (strain ATCC 204508 / S288c) (Baker's yeast) protein is Na(+)/H(+) antiporter (NHA1).